Reading from the N-terminus, the 136-residue chain is MTRVKRGSVARKRRKNILKLASGFQGAHSTIFRTGNQQIIKALASSYRDRGKRKRDFRRLWITRINAAARNNGVSYTKFIRHLYKNQVSSNRKVLAQIAIFDTNSFSTILKKLSSGESIRYRNFSPEFYSGEVRTP.

This sequence belongs to the bacterial ribosomal protein bL20 family.

Its subcellular location is the plastid. The protein localises to the chloroplast. In terms of biological role, binds directly to 23S ribosomal RNA and is necessary for the in vitro assembly process of the 50S ribosomal subunit. It is not involved in the protein synthesizing functions of that subunit. The chain is Large ribosomal subunit protein bL20c from Huperzia lucidula (Shining clubmoss).